The sequence spans 430 residues: uncharacterized protein (430 aa).

The next 12 membrane-spanning stretches (helical) occupy residues 36 to 56, 69 to 89, 100 to 122, 126 to 148, 160 to 180, 197 to 217, 253 to 273, 285 to 305, 317 to 337, 340 to 360, 384 to 404, and 406 to 426; these read LFVV…GVTV, AFAG…ALIV, TGLS…AAII, FLLF…ARYA, TAVS…PSLV, GPFI…FIML, IIVG…IMTM, LGAV…PSLV, AMAI…AFAP, SMIL…FGLI, VLIA…VAGS, and YLAL…VVVW.

This sequence belongs to the major facilitator superfamily.

The protein localises to the cell membrane. This is an uncharacterized protein from Bacillus subtilis (strain 168).